We begin with the raw amino-acid sequence, 500 residues long: MSDLPWLTIIVILPISAGSSIPLFPHRGNNIIRWYTLGICLLEFLLMTYTFRYHFHFDDPLIQLEEDYDWIDLIDLHWRLGIDGLSIGPISLTSFVTTLATLAAWPVTRNPRLFYFLMLAMYSGQVGLFASRDILLFFLMWELELIPVYLLISMWGGKRRLYSATKFILYTAGGSIFISMGASSMGLYGFDGPTLDFEILANKYYPVVLEIVFYLGFFIAHAIKLPILPLHTWLPDTHGEAHYSTCMLLAGIPLKMGGYGLIRINMELLPHAHSLFSPWLVIVGAVQIIYAALTSLSQRNLKRRIAYSSVSHMGFVIVGIGSMADTSLNGAILQMISHGLIGAALFFLAGTSYDGIRTLFLDGIGGMAIPMSKISTMFSSFSMASLALPGMSGFVAESMVLLGIITSRKYSLTFQIVIAAIMAIGMILTPIHLLSMLRRMFYGYKFLNVLNPYLKDSGPREIFISICLFLPVIGTGTYPDLVLSLWDKKVEAIMFRSFHE.

Transmembrane regions (helical) follow at residues 4–24 (LPWL…IPLF), 31–51 (IIRW…TYTF), 87–107 (IGPI…AWPV), 111–131 (PRLF…LFAS), 134–154 (ILLF…LISM), 167–187 (FILY…SMGL), 207–227 (VVLE…KLPI), 242–262 (HYST…YGLI), 274–294 (SLFS…AALT), 305–325 (IAYS…SMAD), 330–350 (GAIL…FLAG), 358–378 (TLFL…STMF), 386–406 (LALP…GIIT), 416–436 (IVIA…LLSM), and 462–482 (IFIS…PDLV).

Belongs to the complex I subunit 4 family.

It is found in the plastid. The protein resides in the chloroplast thylakoid membrane. The catalysed reaction is a plastoquinone + NADH + (n+1) H(+)(in) = a plastoquinol + NAD(+) + n H(+)(out). The enzyme catalyses a plastoquinone + NADPH + (n+1) H(+)(in) = a plastoquinol + NADP(+) + n H(+)(out). This is NAD(P)H-quinone oxidoreductase chain 4, chloroplastic from Cycas taitungensis (Prince sago).